We begin with the raw amino-acid sequence, 748 residues long: Acyl-coenzyme A oxidase (748 aa).

This sequence belongs to the acyl-CoA oxidase family. As to quaternary structure, homooctamer. It depends on FAD as a cofactor.

The protein localises to the peroxisome. It catalyses the reaction a 2,3-saturated acyl-CoA + O2 = a (2E)-enoyl-CoA + H2O2. The protein operates within lipid metabolism; peroxisomal fatty acid beta-oxidation. The protein is Acyl-coenzyme A oxidase (POX1) of Saccharomyces cerevisiae (strain ATCC 204508 / S288c) (Baker's yeast).